The chain runs to 595 residues: 73 kDa paraflagellar rod protein (595 aa).

The segment at 294 to 317 (DAEATKRHAANKEKSDRYIRENED) is disordered. A calmodulin-binding region spans residues 317–337 (DRQEETWNKIQDLERQLQKLG).

Heterodimer of a 69 kDa and a 73 kDa protein.

It localises to the cell projection. Its subcellular location is the cilium. It is found in the flagellum. The protein resides in the cytoplasm. The protein localises to the cytoskeleton. Functionally, major component of the paraflagellar rod (PFR). The PFR is a highly ordered lattices of fibrous proteins that are located inside the flagellum and assume a fixed orientation with respect to the microtubular axoneme. This chain is 73 kDa paraflagellar rod protein (PFRC), found in Trypanosoma brucei brucei.